Here is a 205-residue protein sequence, read N- to C-terminus: Pre-rRNA-processing protein TSR2 (205 aa).

The disordered stretch occupies residues 144 to 205 (SKRVVHIEGD…LVQPKGRRKH (62 aa)). The segment covering 152–177 (GDDDEDDEDVEDYDDEDEDEEMDEVV) has biased composition (acidic residues).

This sequence belongs to the TSR2 family. Interacts with RPS26A.

It localises to the cytoplasm. It is found in the nucleus. Its function is as follows. Required for 20S pre-rRNA processing. The chain is Pre-rRNA-processing protein TSR2 from Saccharomyces cerevisiae (strain ATCC 204508 / S288c) (Baker's yeast).